The primary structure comprises 685 residues: Polyphosphate kinase (685 aa).

Residue Asn45 participates in ATP binding. 2 residues coordinate Mg(2+): Arg372 and Arg402. In terms of domain architecture, PLD phosphodiesterase 1 spans 427–461; the sequence is PGLKIHAKLFLISRKEGDDVVRYAHIGTGNFNEKT. His432 acts as the Phosphohistidine intermediate in catalysis. ATP contacts are provided by Tyr465, Arg561, and His589. The region spanning 584–614 is the PLD phosphodiesterase 2 domain; the sequence is DRYLEHDRIYIFDNAGDKQVYLSSADWMTRN.

It belongs to the polyphosphate kinase 1 (PPK1) family. The cofactor is Mg(2+). In terms of processing, an intermediate of this reaction is the autophosphorylated ppk in which a phosphate is covalently linked to a histidine residue through a N-P bond.

It catalyses the reaction [phosphate](n) + ATP = [phosphate](n+1) + ADP. Its function is as follows. Catalyzes the reversible transfer of the terminal phosphate of ATP to form a long-chain polyphosphate (polyP). This is Polyphosphate kinase from Klebsiella pneumoniae.